Here is a 483-residue protein sequence, read N- to C-terminus: Cobyric acid synthase (483 aa).

A GATase cobBQ-type domain is found at 248–434 (ALRVVVPVLP…LHGLFEQPSA (187 aa)). The Nucleophile role is filled by C329. The active site involves H426.

Belongs to the CobB/CobQ family. CobQ subfamily.

Its pathway is cofactor biosynthesis; adenosylcobalamin biosynthesis. Catalyzes amidations at positions B, D, E, and G on adenosylcobyrinic A,C-diamide. NH(2) groups are provided by glutamine, and one molecule of ATP is hydrogenolyzed for each amidation. In Ectopseudomonas mendocina (strain ymp) (Pseudomonas mendocina), this protein is Cobyric acid synthase.